The primary structure comprises 366 residues: VAVDACLEQDSDSKVACETCTKTNLVMVFGEITTKANVDYEKIVRNTCRNIGFVSADVGLDADNCKVLVNIEQQSPDIAQGVHGHFTKKPEEIGAGDQGHMFGYATDETPELMPLSHVLATKLGARLTEVRKNGTCAWLRPDGNTQVTVEYYNDKGAMVPIRVHTVLISTQHDETVTNDEIAADLKEHVIKPVIPEKYLDSKTICHLNPSGRFVIGGPHGDAGLTGRKIIIDTYGGWGAHGGGAFSGKDPTKVDRRGAYIVRQAAKSIVASGLARRAIVQLLRAIGVPEPLSVFVDTYGTGKIPDREILKIVKETFDFRPGMISINLDLLRGGNGRFLKTAAYGHFGREDPDFTWEVVKPLKWEKA.

Glu-18 provides a ligand contact to K(+). L-methionine contacts are provided by Glu-31 and Gln-74. Residues 142 to 144 (DGN), 210 to 213 (SGRF), Asp-221, 227 to 228 (RK), Ala-244, Lys-248, and Lys-252 each bind ATP. Position 221 (Asp-221) interacts with L-methionine. An L-methionine-binding site is contributed by Lys-252.

This sequence belongs to the AdoMet synthase family. Homotetramer. Requires Mn(2+) as cofactor. Mg(2+) is required as a cofactor. It depends on Co(2+) as a cofactor. The cofactor is K(+).

The protein localises to the cytoplasm. The enzyme catalyses L-methionine + ATP + H2O = S-adenosyl-L-methionine + phosphate + diphosphate. The protein operates within amino-acid biosynthesis; S-adenosyl-L-methionine biosynthesis; S-adenosyl-L-methionine from L-methionine: step 1/1. Its function is as follows. Catalyzes the formation of S-adenosylmethionine from methionine and ATP. The reaction comprises two steps that are both catalyzed by the same enzyme: formation of S-adenosylmethionine (AdoMet) and triphosphate, and subsequent hydrolysis of the triphosphate. In Pisum sativum (Garden pea), this protein is S-adenosylmethionine synthase 1 (SAMS1).